Reading from the N-terminus, the 496-residue chain is Lysine--tRNA ligase (496 aa).

Residues Glu409 and Glu416 each coordinate Mg(2+).

The protein belongs to the class-II aminoacyl-tRNA synthetase family. Homodimer. The cofactor is Mg(2+).

It localises to the cytoplasm. It carries out the reaction tRNA(Lys) + L-lysine + ATP = L-lysyl-tRNA(Lys) + AMP + diphosphate. In Streptococcus pneumoniae (strain Hungary19A-6), this protein is Lysine--tRNA ligase.